The primary structure comprises 391 residues: Elongation factor Tu 1 (391 aa).

The 192-residue stretch at 10–201 (KPHVNIGTIG…AVDSYIPTPE (192 aa)) folds into the tr-type G domain. The G1 stretch occupies residues 19–26 (GHVDHGKT). A GTP-binding site is contributed by 19 to 26 (GHVDHGKT). A Mg(2+)-binding site is contributed by Thr-26. Residues 55-59 (GITIS) form a G2 region. Residues 76–79 (DCPG) form a G3 region. GTP-binding positions include 76 to 80 (DCPGH) and 131 to 134 (NKVD). The interval 131–134 (NKVD) is G4. Residues 169–171 (SAL) form a G5 region.

It belongs to the TRAFAC class translation factor GTPase superfamily. Classic translation factor GTPase family. EF-Tu/EF-1A subfamily. Monomer.

It localises to the cytoplasm. The catalysed reaction is GTP + H2O = GDP + phosphate + H(+). Functionally, GTP hydrolase that promotes the GTP-dependent binding of aminoacyl-tRNA to the A-site of ribosomes during protein biosynthesis. The sequence is that of Elongation factor Tu 1 from Rhizobium etli (strain ATCC 51251 / DSM 11541 / JCM 21823 / NBRC 15573 / CFN 42).